We begin with the raw amino-acid sequence, 330 residues long: Succinylglutamate desuccinylase (330 aa).

Positions 53, 56, and 147 each coordinate Zn(2+). Residue E210 is part of the active site.

It belongs to the AspA/AstE family. Succinylglutamate desuccinylase subfamily. It depends on Zn(2+) as a cofactor.

The enzyme catalyses N-succinyl-L-glutamate + H2O = L-glutamate + succinate. Its pathway is amino-acid degradation; L-arginine degradation via AST pathway; L-glutamate and succinate from L-arginine: step 5/5. Functionally, transforms N(2)-succinylglutamate into succinate and glutamate. The sequence is that of Succinylglutamate desuccinylase from Yersinia pseudotuberculosis serotype O:3 (strain YPIII).